The following is a 1207-amino-acid chain: Histidine kinase 1 (1207 aa).

The span at 1 to 10 (MRGDSFSMSI) shows a compositional bias: polar residues. Residues 1–20 (MRGDSFSMSIENLPDSPMGS) form a disordered region. Residues 1-81 (MRGDSFSMSI…SSYYSVFVVR (81 aa)) lie on the Cytoplasmic side of the membrane. Residues 82-102 (LAIMVMLAILIGLLTVLTWHF) form a helical membrane-spanning segment. The Extracellular portion of the chain corresponds to 103–446 (TRIYTKQSLQ…GKVDERAFKT (344 aa)). A helical transmembrane segment spans residues 447–467 (LIILISASVCIFFIGCVCILI). Over 468 to 1207 (LTNGVSKEMK…PSAFQTSLSA (740 aa)) the chain is Cytoplasmic. The Histidine kinase domain occupies 505–763 (NMSHELRTPM…LMRLYLILST (259 aa)). Phosphohistidine; by autocatalysis is present on His508. Disordered regions lie at residues 964-987 (DTCS…VKPS) and 1000-1021 (DATT…PEEE). Residues 975 to 984 (SGEKQVDKSV) are compositionally biased toward basic and acidic residues. A compositionally biased stretch (low complexity) spans 1000 to 1014 (DATTSNDDSTSASMT). One can recognise a Response regulatory domain in the interval 1045 to 1196 (RILLAEDTPV…LMVSTILSLT (152 aa)). Asp1127 is subject to 4-aspartylphosphate.

Interacts with AHP2, depending of the phosphorylation state of Asp-1075 in the receiver domain, but probably not with AHP1 and AHP3. In terms of processing, autophosphorylated predominantly on His residues. Activation probably requires a transfer of a phosphate group between a His in the transmitter domain and an Asp of the receiver domain. As to expression, mostly expressed in roots, and, to a lower extent, in stems, leaves and flowers.

It is found in the cell membrane. It carries out the reaction ATP + protein L-histidine = ADP + protein N-phospho-L-histidine.. Functions as an osmosensor histidine kinase that detects water stress and transmits the stress signal to a downstream MAPK cascade. This protein undergoes an ATP-dependent autophosphorylation at a conserved histidine residue in the kinase core, and a phosphoryl group is then transferred to a conserved aspartate residue in the receiver domain. Positive regulator of drought and salt stress responses, and abscisic acid (ABA) signaling. Confers drought tolerance, probably by regulating levels of ABA accumulation. Plays a redundant role in regulating plant growth and development. Required for the regulation of desiccation processes during seed formation. The polypeptide is Histidine kinase 1 (AHK1) (Arabidopsis thaliana (Mouse-ear cress)).